The chain runs to 100 residues: Large ribosomal subunit protein uL23 (100 aa).

Belongs to the universal ribosomal protein uL23 family. As to quaternary structure, part of the 50S ribosomal subunit. Contacts protein L29, and trigger factor when it is bound to the ribosome.

Its function is as follows. One of the early assembly proteins it binds 23S rRNA. One of the proteins that surrounds the polypeptide exit tunnel on the outside of the ribosome. Forms the main docking site for trigger factor binding to the ribosome. The protein is Large ribosomal subunit protein uL23 of Aggregatibacter actinomycetemcomitans (Actinobacillus actinomycetemcomitans).